A 153-amino-acid polypeptide reads, in one-letter code: Prefoldin subunit alpha (153 aa).

The disordered stretch occupies residues 126–153; that stretch reads KRLEQGYRQAPGGSPVPHRHDHEDHDEE. Basic and acidic residues predominate over residues 143–153; sequence HRHDHEDHDEE.

Belongs to the prefoldin alpha subunit family. In terms of assembly, heterohexamer of two alpha and four beta subunits.

The protein resides in the cytoplasm. Its function is as follows. Molecular chaperone capable of stabilizing a range of proteins. Seems to fulfill an ATP-independent, HSP70-like function in archaeal de novo protein folding. In Methanoregula boonei (strain DSM 21154 / JCM 14090 / 6A8), this protein is Prefoldin subunit alpha.